The following is a 5537-amino-acid chain: Histone-lysine N-methyltransferase 2D (5537 aa).

Positions 1-60 (MDSQKLAGEDKDSEPAADGPAASEDPSATESDLPNPHVGEVSVLSSGSPRLQETPQDCSG) are disordered. Ser27 carries the post-translational modification Phosphoserine. A compositionally biased stretch (polar residues) spans 43 to 57 (VLSSGSPRLQETPQD). The segment at 104 to 149 (GPNEAVLPSEDLSQIGFPEGLTPAHLGEPGGSCWAHHWCAAWSAGV) adopts a C2HC pre-PHD-type 1; degenerate zinc-finger fold. 3 PHD-type zinc fingers span residues 170-218 (QRCS…PEHS), 226-276 (EARC…CKVC), and 273-323 (CKVC…CRVC). An RING-type 1; atypical zinc finger spans residues 229 to 274 (CAVCEGPGELCDLFFCTSCGHHYHGACLDTALTARKRAGWQCPECK). The RING-type 2; degenerate zinc finger occupies 276-321 (CQACRKPGNDSKMLVCETCDKGYHTFCLKPPMEELPAHSWKCKACR). 4 disordered regions span residues 368-387 (VCSR…EPDA), 393-416 (QGQP…QCEA), 436-1331 (EEMP…RLKS), and 1340-1359 (VVAD…DDDT). The 15 X 5 AA repeats of S/P-P-P-E/P-E/A stretch occupies residues 439–668 (PLLPPPEESP…VSRLSPPPEE (230 aa)). The span at 440–473 (LLPPPEESPLSPPPEESPTSPPPEASRLSPPPEE) shows a compositional bias: pro residues. 3 consecutive repeat copies span residues 442-446 (PPPEE), 460-464 (PPPEA), and 469-473 (PPPEE). Residues 474 to 483 (LPASPLPEAL) show a composition bias toward low complexity. Positions 494–509 (LSPPPEESPLSPPPES) are enriched in pro residues. 2 consecutive repeat copies span residues 496 to 500 (PPPEE) and 504 to 508 (SPPPE). Residues 510–519 (SPFSPLEESP) show a composition bias toward low complexity. Pro residues-rich tracts occupy residues 520–547 (LSPP…PLSP) and 554–595 (LSPP…PPPE). Tandem repeats lie at residues 521–525 (SPPEE), 555–559 (SPPPE), 564–568 (SPPPE), 573–577 (SPPPE), and 582–586 (SPPPE). Residues 596–607 (ASRLFPPFEESP) show a composition bias toward low complexity. Residues 608-649 (LSPPPEESPLSPPPEASRLSPPPEDSPMSPPPEESPMSPPPE) show a composition bias toward pro residues. Tandem repeats lie at residues 609–613 (SPPPE), 618–622 (SPPPE), 627–631 (SPPPE), and 645–649 (SPPPE). Positions 650-662 (VSRLSPLPVVSRL) are enriched in low complexity. Copy 15 of the repeat occupies 663–667 (SPPPE). Residues 663 to 712 (SPPPEESPLSPPPEESPTSPPPEASRLSPPPEDSPTSPPPEDSPASPPPE) show a composition bias toward pro residues. The segment covering 713–725 (DSLMSLPLEESPL) has biased composition (low complexity). A Phosphoserine modification is found at Ser744. 2 stretches are compositionally biased toward basic and acidic residues: residues 745-760 (PRPE…EEPH) and 845-869 (RPEE…KPPE). Composition is skewed to low complexity over residues 889-903 (PSLS…LSEP) and 911-928 (LPEE…LSPQ). Residues 929-940 (LMPPDPLPPPLS) show a composition bias toward pro residues. The segment covering 941–954 (PIITAAAPPALSPL) has biased composition (low complexity). A compositionally biased stretch (pro residues) spans 994–1008 (EPVPPMILPPSPGSP). The segment covering 1048–1057 (PLSVPSPLSP) has biased composition (low complexity). Residues 1068-1080 (AELHEMETEKVSE) are compositionally biased toward basic and acidic residues. Position 1151 is a phosphoserine (Ser1151). Thr1195 carries the phosphothreonine modification. A compositionally biased stretch (polar residues) spans 1207–1216 (EISNLSQGDA). At Ser1249 the chain carries Phosphoserine. Residue Thr1267 is modified to Phosphothreonine. Position 1270 is a phosphoserine (Ser1270). Basic residues-rich tracts occupy residues 1289 to 1302 (GRRR…RIKQ) and 1310 to 1329 (GRRR…RARL). PHD-type zinc fingers lie at residues 1377-1430 (QDMC…CIVC), 1427-1477 (CIVC…CVSC), and 1504-1559 (LVTC…CQPY). The RING-type 3; atypical zinc finger occupies 1507-1557 (CPICHAPYVEEDLLIQCRHCERWMHAGCESLFTEDDVEQAADEGFDCVSCQ). The residue at position 1606 (Ser1606) is a Phosphoserine. Disordered regions lie at residues 1610-1767 (KRRQ…LEDM), 1793-1889 (GVGR…MESK), 1904-2002 (EQHL…NQRS), and 2165-2683 (PQVP…QRQR). The span at 1637–1666 (PDDKKDGDLDTDELLKGEGGVEHMECEIKL) shows a compositional bias: basic and acidic residues. Residue Ser1671 is modified to Phosphoserine. Positions 1675-1685 (EPGKEETEESK) are enriched in basic and acidic residues. 2 stretches are compositionally biased toward basic residues: residues 1702–1712 (RQRKSHTRTKK) and 1753–1762 (KQQRRGRKKS). Composition is skewed to basic and acidic residues over residues 1806-1825 (AKGD…KGDD) and 1832-1841 (EESRGLEGKA). Phosphoserine occurs at positions 1820 and 1834. 2 positions are modified to phosphothreonine: Thr1843 and Thr1865. Residues 1874 to 1889 (DLDRISTEELPKMESK) are compositionally biased toward basic and acidic residues. Low complexity predominate over residues 1979 to 1990 (TTPSTPTTPTTE). A compositionally biased stretch (pro residues) spans 2190-2209 (PTAPPTYPPYPSPTGAPAQP). Ser2239 carries the phosphoserine modification. Thr2240 carries the post-translational modification Phosphothreonine. N6-acetyllysine is present on Lys2246. Phosphoserine is present on residues Ser2260 and Ser2274. A compositionally biased stretch (basic and acidic residues) spans 2280–2292 (ESRKALEVKKEEL). Phosphoserine occurs at positions 2309, 2311, and 2342. Composition is skewed to pro residues over residues 2350 to 2365 (QEPP…PPSH) and 2379 to 2393 (AQPP…PPPE). 2 stretches are compositionally biased toward low complexity: residues 2409–2431 (SRVP…RPLS) and 2494–2505 (FPAALPAGPAGE). Position 2535 is an asymmetric dimethylarginine (Arg2535). The segment covering 2547 to 2560 (LKPPVPQPGLPPPH) has biased composition (pro residues). The span at 2574 to 2584 (KPQSTNYTVAT) shows a compositional bias: polar residues. Residues 2589–2609 (PSGSPLGPSSGSTGESYGLSP) are compositionally biased toward low complexity. Positions 2610–2621 (LRPPSVLPPPAP) are enriched in pro residues. Ser2640 bears the Phosphoserine mark. A coiled-coil region spans residues 2669-2707 (MSGLSQTELEKQRQRQRLRELLIRQQIQRNTLRQEKETA). Residues 2686-2690 (LRELL) carry the LXXLL motif 1 motif. Disordered regions lie at residues 2697 to 2814 (RNTL…QQQQ) and 2835 to 2996 (ARFP…LDDD). The segment covering 2707 to 2722 (AAAAAGAVGPPGSWGA) has biased composition (low complexity). Polar residues-rich tracts occupy residues 2733–2746 (SRGQ…QDKS) and 2781–2790 (PSSMDVNSRQ). Arg2836 bears the Asymmetric dimethylarginine mark. Positions 2931–2940 (PQKPSAPPAP) are enriched in pro residues. The LXXLL motif 2 signature appears at 3038-3042 (LDDLL). Residues 3078–3110 (EKAEREALLRGVEPGPLGPEERPPPAADASEPR) form a disordered region. N6-acetyllysine is present on Lys3079. Ser3130 is subject to Phosphoserine. 2 disordered regions span residues 3147–3209 (ANSL…GSSL) and 3263–3339 (KQQL…AHAL). At Thr3197 the chain carries Phosphothreonine. Low complexity-rich tracts occupy residues 3198–3209 (PSPLSGPGGSSL), 3263–3289 (KQQL…LSAP), and 3301–3320 (GSSP…LAGA). Ser3199 bears the Phosphoserine mark. Residues 3249-3282 (IEDLLEHEKKELQKKQQLSAQLQPAQQQQQQQQQ) adopt a coiled-coil conformation. Residues 3325 to 3334 (LPQPLMPTQP) show a composition bias toward pro residues. At Lys3433 the chain carries N6-acetyllysine. Disordered regions lie at residues 3462 to 3499 (LSGG…TFAQ) and 3596 to 3673 (RNKQ…GPFL). Residues 3562 to 3614 (EKLKLVTEQQSKIQKQLDQVRKQQKEHTNLMAEYRNKQQQQQQQQQQQQQQHS) are a coiled coil. Low complexity-rich tracts occupy residues 3599–3612 (QQQQ…QQQQ) and 3631–3643 (LPGQ…GLQP). Positions 3714-3750 (RLLQERQLQLQQQRMQLAQKLQQQQQQQQQQQHLLGQ) form a coiled coil. At Arg3727 the chain carries Asymmetric dimethylarginine. The disordered stretch occupies residues 3758-3802 (QQGPGVQTNQALGPKPQGLMPPSSHQGLLVQQLSPQPPQGPQGML). Residues 3897–3975 (LQQLQQQQQL…FQQQQQQQQM (79 aa)) are a coiled coil. The interval 3984–4191 (LLSPQQQQQQ…GQGLPGVGIM (208 aa)) is disordered. A compositionally biased stretch (low complexity) spans 4012–4023 (PGALGPTLLLTG). Over residues 4024-4045 (KEQNTVDPAVSSEATEGPSTHQ) the composition is skewed to polar residues. Positions 4073–4108 (SQLLLVQPQPQPQPSSLQLQPPLRLPGQQQQQVSLL) are enriched in low complexity. Residues 4111–4120 (AGGGSHGQLG) show a composition bias toward gly residues. Polar residues predominate over residues 4137-4154 (PSVSLGDQPGSMTQNLLG). Arg4198 is subject to Asymmetric dimethylarginine. Ser4215 is modified (phosphoserine). An LXXLL motif 3 motif is present at residues 4222–4226 (LQALL). 2 disordered regions span residues 4233-4398 (QSQA…VPGH) and 4410-4452 (ASQL…LLLA). Over residues 4237–4251 (VRQTPPYQEPGTQTS) the composition is skewed to polar residues. A compositionally biased stretch (low complexity) spans 4252 to 4282 (PLQGLLGCQPQLGGFPGPQTGPLQELGAGPR). The LXXLL motif 4 motif lies at 4253–4257 (LQGLL). Residues 4283 to 4293 (PQGPPRLPAPP) are compositionally biased toward pro residues. Low complexity-rich tracts occupy residues 4294 to 4305 (GALSTGPVLGPV) and 4320 to 4331 (PSQLPSPSSQLP). A compositionally biased stretch (pro residues) spans 4338–4357 (PTHPGTPKPQGPTLEPPPGR). Ser4359 bears the Phosphoserine mark. Positions 4463–4467 (LQKLL) match the LXXLL motif 5 motif. Lys4465 is subject to N6-acetyllysine. 2 disordered regions span residues 4503-4544 (QGTP…KEDG) and 4613-4727 (KNNL…HLGS). The span at 4619-4633 (PPTPPSSLPPTPPPS) shows a compositional bias: pro residues. Residues 4648 to 4673 (LGEHPKDAASARDSERALRDTSEVKS) are compositionally biased toward basic and acidic residues. Position 4738 is a phosphoserine (Ser4738). Residue Lys4756 forms a Glycyl lysine isopeptide (Lys-Gly) (interchain with G-Cter in SUMO2) linkage. An N6-acetyllysine modification is found at Lys4776. Phosphoserine is present on residues Ser4822 and Ser4849. The segment at 4822-4857 (SPARAGTEPKKGEAEGPGGKEKGLEGKSPDTGPDWL) is disordered. The span at 4828–4849 (TEPKKGEAEGPGGKEKGLEGKS) shows a compositional bias: basic and acidic residues. Residue Lys4880 forms a Glycyl lysine isopeptide (Lys-Gly) (interchain with G-Cter in SUMO2) linkage. Residues 4905 to 4980 (QLSAPPPEEP…GEDSRPPRLK (76 aa)) are disordered. The segment covering 4908–4931 (APPPEEPSPPPSPLAPSPASPPTE) has biased composition (pro residues). Low complexity predominate over residues 4932 to 4941 (PLVELPTEPL). The segment covering 4966 to 4976 (RPPEEGEDSRP) has biased composition (basic and acidic residues). Residues 4990–4994 (LRLLL) carry the LXXLL motif 6 motif. The segment at 5029 to 5069 (MRRCCFCHEEGDGATDGPARLLNLDLDLWVHLNCALWSTEV) adopts a C2HC pre-PHD-type 2 zinc-finger fold. The segment at 5090-5137 (TKCSLCQRTGATSSCNRMRCPNVYHFACAIRAKCMFFKDKTMLCPMHK) adopts a PHD-type 7 zinc-finger fold. Residues 5175-5235 (LHMFRVGGLV…CCYRCSIGEN (61 aa)) enclose the FYR N-terminal domain. One can recognise an FYR C-terminal domain in the interval 5236-5321 (NGRPEFVIKV…ESCQNYLFRY (86 aa)). Positions 5337–5342 (GCARSE) match the WDR5 interaction motif (WIN) motif. The SET domain occupies 5397 to 5513 (NNVYLARSRI…KGEELTYDYQ (117 aa)). Residues Tyr5451 and 5474–5475 (NH) contribute to the S-adenosyl-L-methionine site. Residues Cys5477, Cys5525, Cys5527, and Cys5532 each coordinate Zn(2+). One can recognise a Post-SET domain in the interval 5521–5537 (HKIPCHCGAWNCRKWMN).

It belongs to the class V-like SAM-binding methyltransferase superfamily. Histone-lysine methyltransferase family. TRX/MLL subfamily. As to quaternary structure, component of the MLL2 complex (also named ASCOM complex), at least composed of catalytic subunit KMT2D/MLL2, ASH2L, RBBP5, WDR5, NCOA6, DPY30, KDM6A, PAXIP1/PTIP, PAGR1 and alpha- and beta-tubulin. Forms a core complex with the evolutionary conserved subcomplex WRAD composed of WDR5, RBBP5, ASH2L/ASH2 and DPY30 subunits; WRAD differentially stimulates the methyltransferase activity. Interacts with ESR1; interaction is direct. Interacts (via WIN motif) with WDR5. As to expression, expressed in most adult tissues, including a variety of hematoipoietic cells, with the exception of the liver.

It is found in the nucleus. The enzyme catalyses L-lysyl(4)-[histone H3] + S-adenosyl-L-methionine = N(6)-methyl-L-lysyl(4)-[histone H3] + S-adenosyl-L-homocysteine + H(+). Its function is as follows. Histone methyltransferase that catalyzes methyl group transfer from S-adenosyl-L-methionine to the epsilon-amino group of 'Lys-4' of histone H3 (H3K4). Part of chromatin remodeling machinery predominantly forms H3K4me1 methylation marks at active chromatin sites where transcription and DNA repair take place. Acts as a coactivator for estrogen receptor by being recruited by ESR1, thereby activating transcription. The chain is Histone-lysine N-methyltransferase 2D (KMT2D) from Homo sapiens (Human).